The following is a 442-amino-acid chain: Chitinase-like protein Idgf4 (442 aa).

The N-terminal stretch at 1-21 (MKLYALFSLLVGSLAIGQISA) is a signal peptide. Residues 25 to 442 (HHLLCYYDGN…PILRQVKSKL (418 aa)) form the GH18 domain. C29 and C56 are disulfide-bonded. N224 is a glycosylation site (N-linked (GlcNAc...) asparagine). Residues C343 and C426 are joined by a disulfide bond.

Belongs to the glycosyl hydrolase 18 family. IDGF subfamily. In terms of processing, glycosylated. In terms of tissue distribution, primarily expressed in yolk cells and fat body. In larvae, it is expressed in the imaginal ring, the salivary duct, large salivary gland cells and weakly expressed in imaginal disks. More strongly expressed than Idgf1 and Idgf3.

It is found in the secreted. Functionally, cooperates with insulin-like peptides to stimulate the proliferation, polarization and motility of imaginal disk cells. May act by stabilizing the binding of insulin-like peptides to its receptor through a simultaneous interaction with both molecules to form a multiprotein signaling complex. In Drosophila melanogaster (Fruit fly), this protein is Chitinase-like protein Idgf4 (Idgf4).